The following is a 519-amino-acid chain: Glucoamylase GLA1 (519 aa).

The N-terminal stretch at 1-27 is a signal peptide; the sequence is MRFGVLISVFVAIVSALPLQEGPLNKR. 2 N-linked (GlcNAc...) asparagine glycosylation sites follow: Asn115 and Asn127. Trp166 contributes to the substrate binding site. Asn205 carries N-linked (GlcNAc...) asparagine glycosylation. The active-site Proton acceptor is Asp234. Glu237 functions as the Proton donor in the catalytic mechanism.

The protein belongs to the glycosyl hydrolase 15 family.

The enzyme catalyses Hydrolysis of terminal (1-&gt;4)-linked alpha-D-glucose residues successively from non-reducing ends of the chains with release of beta-D-glucose.. This chain is Glucoamylase GLA1 (GLA1), found in Saccharomycopsis fibuligera (Yeast).